We begin with the raw amino-acid sequence, 512 residues long: Dihydroniloticin synthase CYP71CD2 (512 aa).

The chain crosses the membrane as a helical span at residues 1 to 21; sequence MNLQLDYFSITSFLVFLVVLF. Position 449 (C449) interacts with heme.

It belongs to the cytochrome P450 family. The cofactor is heme.

The protein localises to the membrane. It carries out the reaction tirucalla-7,24-dien-3beta-ol + 2 reduced [NADPH--hemoprotein reductase] + 2 O2 = dihydroniloticin + 2 oxidized [NADPH--hemoprotein reductase] + 2 H2O + 2 H(+). It participates in secondary metabolite biosynthesis; terpenoid biosynthesis. Its function is as follows. Monooxygenase involved in the biosynthesis of limonoids triterpene natural products such as azadirachtin, an antifeedant widely used as bioinsecticide, and possessing many medicinal applications including anti-tumoral, anti-malarial, anti-rheumatic, antibacterial, anti-inflammatory, anti-pyretic and diuretic effects. Catalyzes the conversion of tirucalladienol to dihydroniloticin. This is Dihydroniloticin synthase CYP71CD2 from Azadirachta indica (Neem tree).